Consider the following 62-residue polypeptide: Large ribosomal subunit protein bL35 (62 aa).

The tract at residues 25–62 is disordered; that stretch reads EQAYRSHLSQNKTTKQKRQARKSVQMHSSDVKRFKALI. Positions 53–62 are enriched in basic and acidic residues; the sequence is SDVKRFKALI.

Belongs to the bacterial ribosomal protein bL35 family.

The protein is Large ribosomal subunit protein bL35 of Mycoplasmopsis fermentans (Mycoplasma fermentans).